The sequence spans 284 residues: Bifunctional protein FolD 2 (284 aa).

Residues 166 to 168 (GAS) and Ile-232 contribute to the NADP(+) site.

It belongs to the tetrahydrofolate dehydrogenase/cyclohydrolase family. Homodimer.

The catalysed reaction is (6R)-5,10-methylene-5,6,7,8-tetrahydrofolate + NADP(+) = (6R)-5,10-methenyltetrahydrofolate + NADPH. It carries out the reaction (6R)-5,10-methenyltetrahydrofolate + H2O = (6R)-10-formyltetrahydrofolate + H(+). It functions in the pathway one-carbon metabolism; tetrahydrofolate interconversion. Functionally, catalyzes the oxidation of 5,10-methylenetetrahydrofolate to 5,10-methenyltetrahydrofolate and then the hydrolysis of 5,10-methenyltetrahydrofolate to 10-formyltetrahydrofolate. This is Bifunctional protein FolD 2 from Pseudomonas putida (strain ATCC 47054 / DSM 6125 / CFBP 8728 / NCIMB 11950 / KT2440).